The following is a 404-amino-acid chain: Biflaviolin synthase CYP158A2 (404 aa).

2 residues coordinate flaviolin: arginine 288 and leucine 293. Cysteine 353 is a heme binding site.

It belongs to the cytochrome P450 family. It depends on heme as a cofactor.

The enzyme catalyses 2 flaviolin + 2 reduced [2Fe-2S]-[ferredoxin] + O2 + H(+) = 3,3'-biflaviolin + 2 oxidized [2Fe-2S]-[ferredoxin] + 2 H2O. The catalysed reaction is 2 flaviolin + 2 reduced [2Fe-2S]-[ferredoxin] + O2 + H(+) = 3,8'-biflaviolin + 2 oxidized [2Fe-2S]-[ferredoxin] + 2 H2O. Its pathway is pigment biosynthesis. Its function is as follows. Catalyzes oxidative C-C coupling reaction to polymerize flaviolin and form highly conjugated pigments which protect the soil bacterium from deleterious effects of UV irradiation (three isomers of biflaviolin and one triflaviolin). This Streptomyces coelicolor (strain ATCC BAA-471 / A3(2) / M145) protein is Biflaviolin synthase CYP158A2.